The sequence spans 470 residues: tRNA modification GTPase MnmE (470 aa).

Residues lysine 27, glutamate 90, and arginine 129 each coordinate (6S)-5-formyl-5,6,7,8-tetrahydrofolate. The region spanning glycine 231–leucine 391 is the TrmE-type G domain. GTP contacts are provided by residues asparagine 241–serine 246, threonine 260–threonine 266, and aspartate 285–glycine 288. Mg(2+)-binding residues include serine 245 and threonine 266. Lysine 470 serves as a coordination point for (6S)-5-formyl-5,6,7,8-tetrahydrofolate.

It belongs to the TRAFAC class TrmE-Era-EngA-EngB-Septin-like GTPase superfamily. TrmE GTPase family. In terms of assembly, homodimer. Heterotetramer of two MnmE and two MnmG subunits. The cofactor is K(+).

It localises to the cytoplasm. Functionally, exhibits a very high intrinsic GTPase hydrolysis rate. Involved in the addition of a carboxymethylaminomethyl (cmnm) group at the wobble position (U34) of certain tRNAs, forming tRNA-cmnm(5)s(2)U34. The protein is tRNA modification GTPase MnmE of Syntrophobacter fumaroxidans (strain DSM 10017 / MPOB).